The chain runs to 191 residues: Prostaglandin-H2 D-isomerase (191 aa).

Positions 1 to 28 (MATPNRLWMALLLLGVLGVLQTPAPAQA) are cleaved as a signal peptide. N-linked (GlcNAc...) asparagine glycosylation is present at Asn51. Cys65 acts as the Nucleophile in catalysis. An N-linked (GlcNAc...) asparagine glycan is attached at Asn78. A disulfide bond links Cys89 and Cys186.

Belongs to the calycin superfamily. Lipocalin family. In terms of assembly, monomer. In the male reproductive system, expressed in the testis, epididymis and prostate, and secreted into the seminal fluid.

Its subcellular location is the rough endoplasmic reticulum. The protein resides in the nucleus membrane. It localises to the golgi apparatus. It is found in the cytoplasm. The protein localises to the perinuclear region. Its subcellular location is the secreted. The enzyme catalyses prostaglandin H2 = prostaglandin D2. Catalyzes the conversion of PGH2 to PGD2, a prostaglandin involved in smooth muscle contraction/relaxation and a potent inhibitor of platelet aggregation. Involved in a variety of CNS functions, such as sedation, NREM sleep and PGE2-induced allodynia, and may have an anti-apoptotic role in oligodendrocytes. Binds small non-substrate lipophilic molecules, including biliverdin, bilirubin, retinal, retinoic acid and thyroid hormone, and may act as a scavenger for harmful hydrophobic molecules and as a secretory retinoid and thyroid hormone transporter. Possibly involved in development and maintenance of the blood-brain, blood-retina, blood-aqueous humor and blood-testis barrier. It is likely to play important roles in both maturation and maintenance of the central nervous system and male reproductive system. Involved in PLA2G3-dependent maturation of mast cells. PLA2G3 is secreted by immature mast cells and acts on nearby fibroblasts upstream to PTDGS to synthesize PGD2, which in turn promotes mast cell maturation and degranulation via PTGDR. This chain is Prostaglandin-H2 D-isomerase (PTGDS), found in Bos taurus (Bovine).